We begin with the raw amino-acid sequence, 46 residues long: DNA-directed RNA polymerase subunit Rpo12 (46 aa).

Zn(2+) contacts are provided by C9, C24, and C27.

This sequence belongs to the archaeal Rpo12/eukaryotic RPC10 RNA polymerase subunit family. As to quaternary structure, part of the RNA polymerase complex. Interacts with Rpo3. Forms an Rpo3-Rpo10-Rpo11-Rpo12 complex upon coexpression. Zn(2+) serves as cofactor.

It is found in the cytoplasm. It catalyses the reaction RNA(n) + a ribonucleoside 5'-triphosphate = RNA(n+1) + diphosphate. Functionally, DNA-dependent RNA polymerase (RNAP) catalyzes the transcription of DNA into RNA using the four ribonucleoside triphosphates as substrates. This Methanocaldococcus jannaschii (strain ATCC 43067 / DSM 2661 / JAL-1 / JCM 10045 / NBRC 100440) (Methanococcus jannaschii) protein is DNA-directed RNA polymerase subunit Rpo12.